We begin with the raw amino-acid sequence, 59 residues long: Large ribosomal subunit protein uL30 (59 aa).

Belongs to the universal ribosomal protein uL30 family. Part of the 50S ribosomal subunit.

The sequence is that of Large ribosomal subunit protein uL30 from Buchnera aphidicola subsp. Acyrthosiphon pisum (strain 5A).